We begin with the raw amino-acid sequence, 796 residues long: U-box domain-containing protein 51 (796 aa).

3 disordered regions span residues 163-195 (DMDTETSIADDRSESRFSSDSHSGTVSSTSSHQ), 218-240 (TNIGKQNNEPHHHHHNRAGSLDV), and 270-292 (RSSQMEEASSSSTYSDPTSSSSQ). Residues 171–181 (ADDRSESRFSS) show a composition bias toward basic and acidic residues. Residues 182–195 (DSHSGTVSSTSSHQ) are compositionally biased toward low complexity. Residues 270–291 (RSSQMEEASSSSTYSDPTSSSS) show a composition bias toward low complexity. The stretch at 298-407 (ELEKLKIELR…QRLEDALEGG (110 aa)) forms a coiled coil. The Protein kinase domain occupies 429 to 700 (FSDELKIGVG…DLGKEILPVL (272 aa)). ATP contacts are provided by residues 435–443 (IGVGGYGSV) and K456. The active-site Proton acceptor is D557. In terms of domain architecture, U-box spans 724–796 (NAPTHFYCPI…IKEWRSQLIK (73 aa)).

Belongs to the protein kinase superfamily. Ser/Thr protein kinase family.

It catalyses the reaction L-seryl-[protein] + ATP = O-phospho-L-seryl-[protein] + ADP + H(+). The catalysed reaction is L-threonyl-[protein] + ATP = O-phospho-L-threonyl-[protein] + ADP + H(+). The enzyme catalyses S-ubiquitinyl-[E2 ubiquitin-conjugating enzyme]-L-cysteine + [acceptor protein]-L-lysine = [E2 ubiquitin-conjugating enzyme]-L-cysteine + N(6)-ubiquitinyl-[acceptor protein]-L-lysine.. It participates in protein modification; protein ubiquitination. Functions as an E3 ubiquitin ligase. This Arabidopsis thaliana (Mouse-ear cress) protein is U-box domain-containing protein 51 (PUB51).